We begin with the raw amino-acid sequence, 393 residues long: S-adenosylmethionine synthase 2 (393 aa).

Residue Glu-9 participates in Mg(2+) binding. Residue His-15 participates in ATP binding. A K(+)-binding site is contributed by Glu-43. Glu-56 and Gln-99 together coordinate L-methionine. ATP-binding positions include 167-169 (DGK), 235-238 (SGRF), Asp-246, 252-253 (RK), Ala-269, Lys-273, and Lys-277. Asp-246 lines the L-methionine pocket. Lys-277 is a binding site for L-methionine.

The protein belongs to the AdoMet synthase family. Homotetramer. Mn(2+) is required as a cofactor. Requires Mg(2+) as cofactor. It depends on Co(2+) as a cofactor. K(+) serves as cofactor.

It localises to the cytoplasm. It catalyses the reaction L-methionine + ATP + H2O = S-adenosyl-L-methionine + phosphate + diphosphate. It participates in amino-acid biosynthesis; S-adenosyl-L-methionine biosynthesis; S-adenosyl-L-methionine from L-methionine: step 1/1. Functionally, catalyzes the formation of S-adenosylmethionine from methionine and ATP. The reaction comprises two steps that are both catalyzed by the same enzyme: formation of S-adenosylmethionine (AdoMet) and triphosphate, and subsequent hydrolysis of the triphosphate. May be involved in the synthesis of betain in response to abiotic stress such as high salinity. The polypeptide is S-adenosylmethionine synthase 2 (SAMS2) (Beta vulgaris (Sugar beet)).